Reading from the N-terminus, the 142-residue chain is Small ribosomal subunit protein uS12 (142 aa).

The protein belongs to the universal ribosomal protein uS12 family. Part of the 30S ribosomal subunit.

With S4 and S5 plays an important role in translational accuracy. Located at the interface of the 30S and 50S subunits. The sequence is that of Small ribosomal subunit protein uS12 from Methanocorpusculum labreanum (strain ATCC 43576 / DSM 4855 / Z).